A 497-amino-acid chain; its full sequence is Di-/tripeptide transporter (497 aa).

Transmembrane regions (helical) follow at residues 3-23, 26-46, 57-77, 84-104, 119-139, 155-175, 199-219, 227-247, 294-314, 321-341, 372-392, and 452-472; these read AILLFYMYYAVTKGGLGMSQT, ASIMSIYGSLVYLSTLVGGWL, VFYGGVLIMLGHIVLALPAGV, IALIVVGTGLLKPNVSDMVGG, IFVFGINLGSIIAPWLVPWAA, AGFSLAAVGMFFGLVQYVLGG, IKWVVIIIIAIVAILAAMAGV, VITLLTILAIALPIYYFVMMF, FIILIALIIMASILIPNKVII, LVLLVFYWIGLNLIPFSTFVL, GIEIPLFLRQLIINIFTLIIL, and IVIIIFYLVKMAALWWAWSYI.

Belongs to the major facilitator superfamily. Proton-dependent oligopeptide transporter (POT/PTR) (TC 2.A.17) family.

Its subcellular location is the cell membrane. Its function is as follows. Proton-dependent uptake of di- or tri-peptides. The polypeptide is Di-/tripeptide transporter (dtpT) (Lactobacillus helveticus (Lactobacillus suntoryeus)).